A 363-amino-acid polypeptide reads, in one-letter code: Cytoplasmic tRNA 2-thiolation protein 1 (363 aa).

The disordered stretch occupies residues 340 to 363; the sequence is ASLNGTPRTPPTPAEPVEGIERAA.

This sequence belongs to the TtcA family. CTU1/NCS6/ATPBD3 subfamily.

It localises to the cytoplasm. Its pathway is tRNA modification; 5-methoxycarbonylmethyl-2-thiouridine-tRNA biosynthesis. Functionally, plays a central role in 2-thiolation of mcm(5)S(2)U at tRNA wobble positions of tRNA(Lys), tRNA(Glu) and tRNA(Gln). Directly binds tRNAs and probably acts by catalyzing adenylation of tRNAs, an intermediate required for 2-thiolation. It is unclear whether it acts as a sulfurtransferase that transfers sulfur from thiocarboxylated URM1 onto the uridine of tRNAs at wobble position. Prior mcm(5) tRNA modification by the elongator complex is required for 2-thiolation. May also be involved in protein urmylation. In Cryptococcus neoformans var. neoformans serotype D (strain B-3501A) (Filobasidiella neoformans), this protein is Cytoplasmic tRNA 2-thiolation protein 1.